We begin with the raw amino-acid sequence, 142 residues long: Large ribosomal subunit protein uL13 (142 aa).

It belongs to the universal ribosomal protein uL13 family. As to quaternary structure, part of the 50S ribosomal subunit.

Functionally, this protein is one of the early assembly proteins of the 50S ribosomal subunit, although it is not seen to bind rRNA by itself. It is important during the early stages of 50S assembly. The sequence is that of Large ribosomal subunit protein uL13 from Desulfotalea psychrophila (strain LSv54 / DSM 12343).